Here is a 230-residue protein sequence, read N- to C-terminus: UPF0758 protein Daud_1467 (230 aa).

The MPN domain maps to 108-230 (TVRTPEEAAG…FTSLKLEGLF (123 aa)). Positions 179, 181, and 192 each coordinate Zn(2+). A JAMM motif motif is present at residues 179 to 192 (HNHPSGDPAPSPQD).

The protein belongs to the UPF0758 family.

This is UPF0758 protein Daud_1467 from Desulforudis audaxviator (strain MP104C).